We begin with the raw amino-acid sequence, 1139 residues long: Ras GTPase-activating protein nGAP (1139 aa).

Residues 1-87 form a disordered region; that stretch reads MQTPEVPAER…SRGLPKLKES (87 aa). A Phosphoserine modification is found at Ser-16. The span at 17-36 shows a compositional bias: polar residues; that stretch reads ISGTSTSEKPNSMDTANTSP. Residues 41–158 enclose the PH domain; it reads GFFSKRLKGS…WMENLRRTVQ (118 aa). Residues 45–56 are compositionally biased toward basic residues; the sequence is KRLKGSIKRTKS. A compositionally biased stretch (basic and acidic residues) spans 73–87; it reads STDDRSRGLPKLKES. Ser-89 carries the post-translational modification Phosphoserine. The region spanning 149–267 is the C2 domain; it reads WMENLRRTVQ…TGRQFVEKWY (119 aa). In terms of domain architecture, Ras-GAP spans 343–551; the sequence is GRAKDFLTDL…GGMKRFLLEI (209 aa). Thr-620 is subject to Phosphothreonine. A Phosphoserine modification is found at Ser-663. Disordered regions lie at residues 684 to 704, 751 to 782, 803 to 869, 910 to 953, and 1116 to 1139; these read ASSQ…LPNG, ETQS…LSFQ, SLEN…GQAQ, EPVQ…SATM, and NGIS…NSSC. 2 stretches are compositionally biased toward polar residues: residues 751 to 760 and 803 to 818; these read ETQSTPQSAP and SLEN…QSNS. Positions 833-855 are enriched in basic and acidic residues; it reads DFTKRSTQSEDFSRRHTVPDRHI. Ser-864 bears the Phosphoserine mark. Positions 916–928 are enriched in low complexity; the sequence is SRSRQQSSSSRES.

As to quaternary structure, interacts with PEAK1.

In terms of biological role, inhibitory regulator of the Ras-cyclic AMP pathway. The chain is Ras GTPase-activating protein nGAP (RASAL2) from Homo sapiens (Human).